The sequence spans 475 residues: Sulfate adenylyltransferase subunit 1 (475 aa).

A tr-type G domain is found at 25–239 (KSLLRFLTCG…EVLETVEIQR (215 aa)). The tract at residues 34-41 (GSVDDGKS) is G1. 34–41 (GSVDDGKS) is a GTP binding site. The interval 92-96 (GITID) is G2. Residues 113–116 (DTPG) are G3. GTP-binding positions include 113 to 117 (DTPGH) and 168 to 171 (NKMD). The tract at residues 168-171 (NKMD) is G4. Residues 206–208 (SAL) are G5.

This sequence belongs to the TRAFAC class translation factor GTPase superfamily. Classic translation factor GTPase family. CysN/NodQ subfamily. Heterodimer composed of CysD, the smaller subunit, and CysN.

The catalysed reaction is sulfate + ATP + H(+) = adenosine 5'-phosphosulfate + diphosphate. It participates in sulfur metabolism; hydrogen sulfide biosynthesis; sulfite from sulfate: step 1/3. Its function is as follows. With CysD forms the ATP sulfurylase (ATPS) that catalyzes the adenylation of sulfate producing adenosine 5'-phosphosulfate (APS) and diphosphate, the first enzymatic step in sulfur assimilation pathway. APS synthesis involves the formation of a high-energy phosphoric-sulfuric acid anhydride bond driven by GTP hydrolysis by CysN coupled to ATP hydrolysis by CysD. The sequence is that of Sulfate adenylyltransferase subunit 1 from Escherichia coli O9:H4 (strain HS).